We begin with the raw amino-acid sequence, 611 residues long: MFS siderochrome iron transporter C (611 aa).

A disordered region spans residues 1-25 (MPFLDHRTGPSYGTIDQMEQHSDDE). Asparagine 62 is a glycosylation site (N-linked (GlcNAc...) asparagine). 14 consecutive transmembrane segments (helical) span residues 71–91 (VIAYVSIFLMSFCTSLEGQTV), 107–127 (LISTVLVVQNVVNAVIKPPMA), 136–156 (FEAFCVSILIYVLGYIQMAAS), 165–185 (AQIFYSAGSTGLQILQQVFIA), 194–214 (AFLALLPEFPFLVTVWIGPTI), 228–248 (YGMWSIILPASFLPLALSLLL), 282–302 (MGGLILLSAAVTLILVPLTLA), 313–333 (SIVAMIVVGLFCLIALPFWES), 353–373 (ALAGCTLAFWYFMAFYFSVQP), 393–413 (VTQTFAFTSTIAAFAVSILIK), 418–438 (YRAFVIAGCVVYIIGMVLMMV), 449–469 (ILVTQVVVGIGGGLLNVPVQL), 486–506 (MFLTSMEMGGAVGAALSGAVW), and 560–580 (LLILALIAIIPLVPLSLAMED). Residues 592–611 (VDPVPAEEGEIEPNRHVKRT) form a disordered region.

Belongs to the major facilitator superfamily.

Its subcellular location is the membrane. Its function is as follows. Major facilitator transporter that contributes to the maintenance of intracellular siderophore ferricrocin (FC) levels. Plays a role in conidiation and confers protection against oxidative stress. Also contributes to fungal virulence in the Galleria mellonella animal model system. Does not appear to play a role in either siderophore export or uptake. The sequence is that of MFS siderochrome iron transporter C from Aspergillus fumigatus (strain ATCC MYA-4609 / CBS 101355 / FGSC A1100 / Af293) (Neosartorya fumigata).